Reading from the N-terminus, the 670-residue chain is Methionine--tRNA ligase (670 aa).

The 'HIGH' region motif lies at 14 to 24 (PYANGHLHLGH). Residues C145, C148, C158, and C161 each contribute to the Zn(2+) site. The short motif at 330–334 (KMSKS) is the 'KMSKS' region element. K333 provides a ligand contact to ATP. A tRNA-binding domain is found at 570–670 (DFAKVDLRIA…AGAFPGMKVK (101 aa)).

The protein belongs to the class-I aminoacyl-tRNA synthetase family. MetG type 1 subfamily. As to quaternary structure, homodimer. It depends on Zn(2+) as a cofactor.

The protein resides in the cytoplasm. The enzyme catalyses tRNA(Met) + L-methionine + ATP = L-methionyl-tRNA(Met) + AMP + diphosphate. In terms of biological role, is required not only for elongation of protein synthesis but also for the initiation of all mRNA translation through initiator tRNA(fMet) aminoacylation. This is Methionine--tRNA ligase from Legionella pneumophila (strain Corby).